The sequence spans 287 residues: Large ribosomal subunit protein uL2 (287 aa).

The interval 221-287 (RGSVMNPCDH…SKRSRGGRDS (67 aa)) is disordered. The span at 258-287 (KTRKKNKPSNKLVVRRRRRVSKRSRGGRDS) shows a compositional bias: basic residues.

The protein belongs to the universal ribosomal protein uL2 family. Part of the 50S ribosomal subunit. Forms a bridge to the 30S subunit in the 70S ribosome.

Functionally, one of the primary rRNA binding proteins. Required for association of the 30S and 50S subunits to form the 70S ribosome, for tRNA binding and peptide bond formation. It has been suggested to have peptidyltransferase activity; this is somewhat controversial. Makes several contacts with the 16S rRNA in the 70S ribosome. The protein is Large ribosomal subunit protein uL2 of Prochlorococcus marinus (strain AS9601).